We begin with the raw amino-acid sequence, 560 residues long: Nuclear receptor subfamily 5 group A member 2 (560 aa).

The disordered stretch occupies residues 17-54 (GLPAIAPAPGSETPHSPKLEEKHREKRAGLPDRHRRPI). Residues 31–48 (HSPKLEEKHREKRAGLPD) show a composition bias toward basic and acidic residues. A DNA-binding region (nuclear receptor) is located at residues 104 to 179 (EELCPVCGDK…VGMKLEAVRA (76 aa)). 8 residues coordinate Zn(2+): Cys107, Cys110, Cys124, Cys127, Cys143, Cys149, Cys159, and Cys162. 2 NR C4-type zinc fingers span residues 107–127 (CPVC…CESC) and 143–162 (CIEN…CPYC). The segment at 173–188 (KLEAVRADRMRGGRNK) is C-terminal extension (CTE). Residues 189–208 (FGPMYKRDRALKQQKKALIR) carry the FTZ-F1 box motif. Lys289 participates in a covalent cross-link: Glycyl lysine isopeptide (Lys-Gly) (interchain with G-Cter in SUMO1). The 240-residue stretch at 319-558 (SIPHLILELL…NLLIEMLHAK (240 aa)) folds into the NR LBD domain. The a phospholipid derivative site is built by Tyr535 and Lys539. The tract at residues 547-558 (YNNLLIEMLHAK) is AF-2.

The protein belongs to the nuclear hormone receptor family. NR5 subfamily. Monomer; Binds DNA as a monomer. Interacts with nuclear receptor corepressors NR0B1 and NR0B2; repressing NR5A2 nuclear receptor activity. Interacts with nuclear receptor coactivators CTNNB1, PPARGC1A and NCOA2; interaction takes place following ligand-binding and promotes target gene activation. Interacts (when sumoylated) with GPS2; interaction with GPS2 onto hepatic acute phase protein promoters prevents N-Cor corepressor complex dissociation. Interacts with HNF1A. Interacts with GRIP1. In terms of processing, sumoylated by SUMO1 at Lys-289 during the hepatic acute phase response, leading to promote interaction with GPS2 and prevent N-Cor corepressor complex dissociation.

Its subcellular location is the nucleus. The protein localises to the chromosome. In terms of biological role, orphan nuclear receptor that binds DNA as a monomer to the 5'-TCAAGGCCA-3' sequence and controls expression of target genes: regulates key biological processes, such as early embryonic development, cholesterol and bile acid synthesis pathways, as well as liver and pancreas morphogenesis. Ligand-binding causes conformational change which causes recruitment of coactivators, promoting target gene activation. The specific ligand is unknown, but specific phospholipids, such as phosphatidylethanolamine, phosphatidylserine, dilauroyl phosphatidylcholine and diundecanoyl phosphatidylcholine can act as ligand in vitro. Acts as a pioneer transcription factor, which unwraps target DNA from histones and elicits local opening of closed chromatin. Plays a central role during preimplantation stages of embryonic development. Plays a minor role in zygotic genome activation (ZGA) by regulating a small set of two-cell stage genes. Plays a major role in morula development (2-16 cells embryos) by acting as a master regulator at the 8-cell stage, controlling expression of lineage-specifying transcription factors and genes involved in mitosis, telomere maintenance and DNA repair. Zygotic NR5A2 binds to both closed and open chromatin with other transcription factors, often at SINE B1/Alu repeats DNA elements, promoting chromatin accessibility at nearby regulatory regions. Also involved in the epiblast stage of development and embryonic stem cell pluripotency, by promoting expression of POU5F1/OCT4. Regulates other processes later in development, such as formation of connective tissue in lower jaw and middle ear, neural stem cell differentiation, ovarian follicle development and Sertoli cell differentiation. Involved in exocrine pancreas development and acinar cell differentiation. Acts as an essential transcriptional regulator of lipid metabolism. Key regulator of cholesterol 7-alpha-hydroxylase gene (CYP7A) expression in liver. Also acts as a negative regulator of inflammation in different organs, such as, liver and pancreas. Protects against intestinal inflammation via its ability to regulate glucocorticoid production. Plays an anti-inflammatory role during the hepatic acute phase response by acting as a corepressor: inhibits the hepatic acute phase response by preventing dissociation of the N-Cor corepressor complex. Acts as a regulator of immunity by promoting lymphocyte T-cell development, proliferation and effector functions. Also involved in resolution of endoplasmic reticulum stress in the liver. The chain is Nuclear receptor subfamily 5 group A member 2 from Rattus norvegicus (Rat).